The sequence spans 1167 residues: Phenyloxazoline synthase MbtB (1167 aa).

A Carrier 1 domain is found at 2–78 (EAVVTSSQTV…AWTRLVGERT (77 aa)). At Ser-39 the chain carries O-(pantetheine 4'-phosphoryl)serine. The interval 78–100 (TAESPGAATQSGDTAASAGDPDA) is disordered. Residues 98–390 (PDAPFPLAPI…SSLMLDVDFT (293 aa)) form a condensation/cyclization region. The segment at 575–967 (TYAELRERVL…RIAGVEAAVA (393 aa)) is adenylation. Positions 1054–1130 (VPSTALERAL…ALARRLVDHE (77 aa)) constitute a Carrier 2 domain. O-(pantetheine 4'-phosphoryl)serine is present on Ser-1089.

The protein belongs to the ATP-dependent AMP-binding enzyme family. MbtB subfamily. The cofactor is pantetheine 4'-phosphate. 4'-phosphopantetheine is transferred from CoA to a specific serine in each of the two carrier protein domains, leading to their activation from apo to holo forms.

Its pathway is siderophore biosynthesis; mycobactin biosynthesis. Functionally, involved in the initial steps of the mycobactin biosynthetic pathway. Putatively couples activated salicylic acid with serine or threonine and cyclizes this precursor to the hydroxyphenyloxazoline ring system present in this class of siderophores. This Mycobacterium sp. (strain MCS) protein is Phenyloxazoline synthase MbtB (mbtB).